The following is a 463-amino-acid chain: tRNA-2-methylthio-N(6)-dimethylallyladenosine synthase (463 aa).

One can recognise an MTTase N-terminal domain in the interval 5–125 (RKLHIKSYGC…LPQLLAKAEQ (121 aa)). [4Fe-4S] cluster contacts are provided by Cys-14, Cys-50, Cys-88, Cys-166, Cys-170, and Cys-173. One can recognise a Radical SAM core domain in the interval 152–384 (RARGISAFVT…QQLIDQQQSA (233 aa)). Residues 387–449 (KAAIGRTVEV…RYSLLGELAS (63 aa)) enclose the TRAM domain.

It belongs to the methylthiotransferase family. MiaB subfamily. As to quaternary structure, monomer. [4Fe-4S] cluster serves as cofactor.

It is found in the cytoplasm. The catalysed reaction is N(6)-dimethylallyladenosine(37) in tRNA + (sulfur carrier)-SH + AH2 + 2 S-adenosyl-L-methionine = 2-methylsulfanyl-N(6)-dimethylallyladenosine(37) in tRNA + (sulfur carrier)-H + 5'-deoxyadenosine + L-methionine + A + S-adenosyl-L-homocysteine + 2 H(+). Its function is as follows. Catalyzes the methylthiolation of N6-(dimethylallyl)adenosine (i(6)A), leading to the formation of 2-methylthio-N6-(dimethylallyl)adenosine (ms(2)i(6)A) at position 37 in tRNAs that read codons beginning with uridine. This is tRNA-2-methylthio-N(6)-dimethylallyladenosine synthase from Rhodopseudomonas palustris (strain TIE-1).